Consider the following 299-residue polypeptide: Homoserine kinase (299 aa).

85-95 (PMSRGLGSSAT) is a binding site for ATP.

It belongs to the GHMP kinase family. Homoserine kinase subfamily.

It is found in the cytoplasm. The catalysed reaction is L-homoserine + ATP = O-phospho-L-homoserine + ADP + H(+). It functions in the pathway amino-acid biosynthesis; L-threonine biosynthesis; L-threonine from L-aspartate: step 4/5. Catalyzes the ATP-dependent phosphorylation of L-homoserine to L-homoserine phosphate. In Clostridium novyi (strain NT), this protein is Homoserine kinase.